A 426-amino-acid polypeptide reads, in one-letter code: Fc receptor-like B (426 aa).

An N-terminal signal peptide occupies residues 1–17 (MWPLTALLLLVPSSGQA). 2 Ig-like C2-type domains span residues 23-101 (PILS…LSVS) and 103-189 (DWLI…VAVT). 2 cysteine pairs are disulfide-bonded: Cys44/Cys85 and Cys124/Cys168. Asn152 carries an N-linked (GlcNAc...) asparagine glycan. A disordered region spans residues 400-426 (ELRGTPETPTSHFAVSPGTPETTPVES). Residues 406 to 426 (ETPTSHFAVSPGTPETTPVES) are compositionally biased toward polar residues.

In terms of tissue distribution, expressed at low levels. Expressed in B-lymphocytes. Detected in tonsil, lung, kidney, spleen and placenta. Expressed by a small subset of germinal center B-cells in tonsils and by melanocytes (at protein level).

It is found in the cytoplasm. Its subcellular location is the endoplasmic reticulum. In Homo sapiens (Human), this protein is Fc receptor-like B (FCRLB).